A 452-amino-acid polypeptide reads, in one-letter code: Imidazoleglycerol-phosphate dehydratase (452 aa).

A unknown activity region spans residues 1–233; the sequence is MASPVQALLL…VGASVVLTPG (233 aa). The tract at residues 234-452 is imidazoleglycerol-phosphate dehydratase; it reads LGELLDLVPA…GVPSTKGVLA (219 aa).

This sequence belongs to the imidazoleglycerol-phosphate dehydratase family.

It carries out the reaction D-erythro-1-(imidazol-4-yl)glycerol 3-phosphate = 3-(imidazol-4-yl)-2-oxopropyl phosphate + H2O. The protein operates within amino-acid biosynthesis; L-histidine biosynthesis; L-histidine from 5-phospho-alpha-D-ribose 1-diphosphate: step 6/9. This Phytophthora nicotianae (Potato buckeye rot agent) protein is Imidazoleglycerol-phosphate dehydratase (HIS3).